A 220-amino-acid chain; its full sequence is MGQKIHPLGFRLGTTQNHCSYWFAQSKKIYSKLVKEDKEIRNCIEKYVQKHTNNPFHYGGIARIEIYRKTDLIRVEIHMGFTDLLTENGGIRFEQLKSNIEKIVNSKNQKLCLILIKIDKPYTEPKVLAEYIALQLENRVVFRKAVKKALELAGNFKNKGGIKIQIAGRLNGIEIARVEWTREGRVPLQTIRAHINYYYYPAKTIYGILGIKVWIYQNDE.

The 72-residue stretch at 48–119 folds into the KH type-2 domain; sequence VQKHTNNPFH…KLCLILIKID (72 aa).

It belongs to the universal ribosomal protein uS3 family. In terms of assembly, part of the 30S ribosomal subunit.

It localises to the plastid. The protein resides in the chloroplast. This Psilotum nudum (Whisk fern) protein is Small ribosomal subunit protein uS3c (rps3).